The chain runs to 238 residues: Dephospho-CoA kinase (238 aa).

In terms of domain architecture, DPCK spans 3–233 (IIGLTGGVGT…QRPFASPPRA (231 aa)). ATP is bound at residue 11–16 (GTGKST). Disordered stretches follow at residues 110 to 129 (HGVP…VGFS) and 219 to 238 (LASA…YSDG).

The protein belongs to the CoaE family.

It is found in the cytoplasm. The enzyme catalyses 3'-dephospho-CoA + ATP = ADP + CoA + H(+). It functions in the pathway cofactor biosynthesis; coenzyme A biosynthesis; CoA from (R)-pantothenate: step 5/5. In terms of biological role, catalyzes the phosphorylation of the 3'-hydroxyl group of dephosphocoenzyme A to form coenzyme A. The chain is Dephospho-CoA kinase from Synechococcus sp. (strain JA-2-3B'a(2-13)) (Cyanobacteria bacterium Yellowstone B-Prime).